The sequence spans 185 residues: uncharacterized protein (185 aa).

Transmembrane regions (helical) follow at residues 5–25 (SFLI…RIWL), 63–83 (LATV…LILI), 97–117 (FLGL…VLLI), and 149–169 (IIPA…GLQF).

The protein belongs to the YggT family.

The protein localises to the cell membrane. This is an uncharacterized protein from Vibrio alginolyticus.